Here is a 61-residue protein sequence, read N- to C-terminus: Small ribosomal subunit protein uS14 (61 aa).

Residues Cys-24, Cys-27, Cys-40, and Cys-43 each contribute to the Zn(2+) site.

Belongs to the universal ribosomal protein uS14 family. Zinc-binding uS14 subfamily. Part of the 30S ribosomal subunit. Contacts proteins S3 and S10. Zn(2+) serves as cofactor.

In terms of biological role, binds 16S rRNA, required for the assembly of 30S particles and may also be responsible for determining the conformation of the 16S rRNA at the A site. This chain is Small ribosomal subunit protein uS14, found in Geotalea uraniireducens (strain Rf4) (Geobacter uraniireducens).